The primary structure comprises 258 residues: Deoxyribose-phosphate aldolase (258 aa).

Aspartate 102 serves as the catalytic Proton donor/acceptor. Lysine 165 serves as the catalytic Schiff-base intermediate with acetaldehyde. Lysine 199 functions as the Proton donor/acceptor in the catalytic mechanism.

Belongs to the DeoC/FbaB aldolase family. DeoC type 2 subfamily.

It is found in the cytoplasm. The enzyme catalyses 2-deoxy-D-ribose 5-phosphate = D-glyceraldehyde 3-phosphate + acetaldehyde. Its pathway is carbohydrate degradation; 2-deoxy-D-ribose 1-phosphate degradation; D-glyceraldehyde 3-phosphate and acetaldehyde from 2-deoxy-alpha-D-ribose 1-phosphate: step 2/2. Catalyzes a reversible aldol reaction between acetaldehyde and D-glyceraldehyde 3-phosphate to generate 2-deoxy-D-ribose 5-phosphate. This Vibrio campbellii (strain ATCC BAA-1116) protein is Deoxyribose-phosphate aldolase.